A 147-amino-acid polypeptide reads, in one-letter code: Cyanate hydratase (147 aa).

Active-site residues include Arg-88, Glu-91, and Ser-114.

Belongs to the cyanase family.

The catalysed reaction is cyanate + hydrogencarbonate + 3 H(+) = NH4(+) + 2 CO2. Its function is as follows. Catalyzes the reaction of cyanate with bicarbonate to produce ammonia and carbon dioxide. The protein is Cyanate hydratase of Methylibium petroleiphilum (strain ATCC BAA-1232 / LMG 22953 / PM1).